The primary structure comprises 331 residues: Bifunctional nuclease 1 (331 aa).

The 136-residue stretch at cysteine 126–valine 261 folds into the BFN domain. A UVR domain is found at glutamate 291–lysine 326.

The protein belongs to the bifunctional nuclease family.

The protein localises to the nucleus. Its function is as follows. Bifunctional nuclease with both RNase and DNase activities. Involved in basal defense response. Participates in abscisic acid-derived callose deposition following infection by a necrotrophic pathogen. The sequence is that of Bifunctional nuclease 1 (BBD1) from Oryza sativa subsp. japonica (Rice).